We begin with the raw amino-acid sequence, 207 residues long: Oligoribonuclease (207 aa).

Residues 8–172 (LVWIDCEMTG…ADILESVREL (165 aa)) enclose the Exonuclease domain. Tyr129 is a catalytic residue.

This sequence belongs to the oligoribonuclease family.

It is found in the cytoplasm. In terms of biological role, 3'-to-5' exoribonuclease specific for small oligoribonucleotides. This is Oligoribonuclease from Leifsonia xyli subsp. xyli (strain CTCB07).